Consider the following 763-residue polypeptide: 5-methyltetrahydropteroyltriglutamate--homocysteine methyltransferase (763 aa).

5-methyltetrahydropteroyltri-L-glutamate-binding positions include 16-19 and K117; that span reads RELK. L-homocysteine contacts are provided by residues 438 to 440 and E491; that span reads IGS. Residues 438–440 and E491 contribute to the L-methionine site; that span reads IGS. Residues 522-523 and W568 each bind 5-methyltetrahydropteroyltri-L-glutamate; that span reads RC. D606 serves as a coordination point for L-homocysteine. D606 serves as a coordination point for L-methionine. Position 612 (E612) interacts with 5-methyltetrahydropteroyltri-L-glutamate. Residues H648, C650, and E672 each coordinate Zn(2+). The active-site Proton donor is H701. Residue C733 coordinates Zn(2+).

This sequence belongs to the vitamin-B12 independent methionine synthase family. It depends on Zn(2+) as a cofactor.

The enzyme catalyses 5-methyltetrahydropteroyltri-L-glutamate + L-homocysteine = tetrahydropteroyltri-L-glutamate + L-methionine. It functions in the pathway amino-acid biosynthesis; L-methionine biosynthesis via de novo pathway; L-methionine from L-homocysteine (MetE route): step 1/1. Its function is as follows. Catalyzes the transfer of a methyl group from 5-methyltetrahydrofolate to homocysteine resulting in methionine formation. The protein is 5-methyltetrahydropteroyltriglutamate--homocysteine methyltransferase of Pseudomonas paraeruginosa (strain DSM 24068 / PA7) (Pseudomonas aeruginosa (strain PA7)).